A 191-amino-acid polypeptide reads, in one-letter code: uncharacterized protein (191 aa).

Residues 6–66 enclose the HTH tetR-type domain; that stretch reads GLTQKMIVDA…ELAVRGLTKL (61 aa). Positions 29–48 form a DNA-binding region, H-T-H motif; that stretch reads SLAALSKKMNVRPPSLYNHI.

This is an uncharacterized protein from Bacillus subtilis (strain 168).